Here is a 745-residue protein sequence, read N- to C-terminus: Copper-transporting ATPase (745 aa).

The 67-residue stretch at 1–67 (MKESFYIEGM…LIEKLGYSPK (67 aa)) folds into the HMA domain. The Cytoplasmic segment spans residues 1–83 (MKESFYIEGM…KKEFFSPNVK (83 aa)). Residues Cys12 and Cys15 each coordinate Cu cation. Residues 84–104 (LALAVIFTLFVVYLSMGAMLS) form a helical membrane-spanning segment. The Extracellular portion of the chain corresponds to 105–124 (PSLLPESLLTINHHSNFLNA). A helical transmembrane segment spans residues 125-144 (CLQLIGALIVMHLGRDFYIQ). Topologically, residues 145 to 151 (GFKALWH) are cytoplasmic. Residues 152-172 (RQPNMSSLIAIGTSAALISSL) traverse the membrane as a helical segment. At 173–194 (WQLYLVYTNHYTDQWSYGHYYF) the chain is on the extracellular side. A helical membrane pass occupies residues 195 to 215 (ESVCVILMFVMVGKRIENVSK). Over 216–343 (DKALDAMQAL…KAEISRLADK (128 aa)) the chain is Cytoplasmic. The chain crosses the membrane as a helical span at residues 344–366 (VSSVFVPSVIAIAVLAFVVWLII). The Extracellular segment spans residues 367-379 (APKPDFWWNFRTA). Residues 380–397 (LEVFVSVLVISCPCALGL) form a helical membrane-spanning segment. The Cytoplasmic portion of the chain corresponds to 398–685 (ATPMSILVAN…KLSQATIKNI (288 aa)). Asp435 acts as the 4-aspartylphosphate intermediate in catalysis. Mg(2+) is bound by residues Asp631 and Asp635. The helical transmembrane segment at 686-705 (KENLFWAFCYNSVFIPLACG) threads the bilayer. The Extracellular segment spans residues 706 to 716 (VLYKANIMLSP). The helical transmembrane segment at 717-735 (AIAGLAMSLSSVSVVLNSQ) threads the bilayer. Over 736–745 (RLRNFKIKDH) the chain is Cytoplasmic.

It belongs to the cation transport ATPase (P-type) (TC 3.A.3) family. Type IB subfamily.

The protein localises to the cell membrane. It carries out the reaction Cu(2+)(in) + ATP + H2O = Cu(2+)(out) + ADP + phosphate + H(+). In terms of biological role, probably involved in copper export. This chain is Copper-transporting ATPase (copA), found in Helicobacter pylori (strain J99 / ATCC 700824) (Campylobacter pylori J99).